The chain runs to 595 residues: Glucans biosynthesis glucosyltransferase H (595 aa).

6 helical membrane-spanning segments follow: residues 13 to 35 (ASRL…LFLQ), 50 to 72 (SVLI…LGLF), 365 to 387 (IMAY…APFF), 414 to 436 (GLAV…EAIV), 449 to 471 (VLVS…MAFQ), and 526 to 548 (LVPW…AVTS).

The protein belongs to the glycosyltransferase 2 family. OpgH subfamily.

It is found in the cell inner membrane. It participates in glycan metabolism; osmoregulated periplasmic glucan (OPG) biosynthesis. Involved in the biosynthesis of osmoregulated periplasmic glucans (OPGs). The sequence is that of Glucans biosynthesis glucosyltransferase H (opgH) from Cereibacter sphaeroides (strain ATCC 17023 / DSM 158 / JCM 6121 / CCUG 31486 / LMG 2827 / NBRC 12203 / NCIMB 8253 / ATH 2.4.1.) (Rhodobacter sphaeroides).